The following is a 332-amino-acid chain: Ribosomal RNA small subunit methyltransferase H (332 aa).

Residues 37–39 (GGY), Asp55, Phe82, Asp103, and Gln110 contribute to the S-adenosyl-L-methionine site. The interval 281–332 (TKRPVTPSDEETAANPRARSAKLRAGERTAAPAQPEAPLPHWPTLASVMGRR) is disordered.

It belongs to the methyltransferase superfamily. RsmH family.

The protein localises to the cytoplasm. It catalyses the reaction cytidine(1402) in 16S rRNA + S-adenosyl-L-methionine = N(4)-methylcytidine(1402) in 16S rRNA + S-adenosyl-L-homocysteine + H(+). Specifically methylates the N4 position of cytidine in position 1402 (C1402) of 16S rRNA. This is Ribosomal RNA small subunit methyltransferase H from Rhodopseudomonas palustris (strain BisA53).